Here is a 232-residue protein sequence, read N- to C-terminus: 5'-methylthioadenosine/S-adenosylhomocysteine nucleosidase (232 aa).

The active-site Proton acceptor is glutamate 12. Substrate contacts are provided by residues glycine 78, isoleucine 152, and 173 to 174 (ME). Aspartate 197 acts as the Proton donor in catalysis.

This sequence belongs to the PNP/UDP phosphorylase family. MtnN subfamily. Homodimer.

It catalyses the reaction S-adenosyl-L-homocysteine + H2O = S-(5-deoxy-D-ribos-5-yl)-L-homocysteine + adenine. It carries out the reaction S-methyl-5'-thioadenosine + H2O = 5-(methylsulfanyl)-D-ribose + adenine. The catalysed reaction is 5'-deoxyadenosine + H2O = 5-deoxy-D-ribose + adenine. The protein operates within amino-acid biosynthesis; L-methionine biosynthesis via salvage pathway; S-methyl-5-thio-alpha-D-ribose 1-phosphate from S-methyl-5'-thioadenosine (hydrolase route): step 1/2. Functionally, catalyzes the irreversible cleavage of the glycosidic bond in both 5'-methylthioadenosine (MTA) and S-adenosylhomocysteine (SAH/AdoHcy) to adenine and the corresponding thioribose, 5'-methylthioribose and S-ribosylhomocysteine, respectively. Also cleaves 5'-deoxyadenosine, a toxic by-product of radical S-adenosylmethionine (SAM) enzymes, into 5-deoxyribose and adenine. Thus, is required for in vivo function of the radical SAM enzymes biotin synthase and lipoic acid synthase, that are inhibited by 5'-deoxyadenosine accumulation. The polypeptide is 5'-methylthioadenosine/S-adenosylhomocysteine nucleosidase (Citrobacter koseri (strain ATCC BAA-895 / CDC 4225-83 / SGSC4696)).